The chain runs to 143 residues: Large ribosomal subunit protein uL15 (143 aa).

The interval 1–57 (MQLNNLKPAAGSKHAKRRVGRGIGSGLGKTAGRGHKGQKSRSGGFHKVGFEGGQMPL) is disordered. The segment covering 21–31 (RGIGSGLGKTA) has biased composition (gly residues).

The protein belongs to the universal ribosomal protein uL15 family. In terms of assembly, part of the 50S ribosomal subunit.

Functionally, binds to the 23S rRNA. The protein is Large ribosomal subunit protein uL15 of Ralstonia pickettii (strain 12J).